Here is a 176-residue protein sequence, read N- to C-terminus: ATP-dependent protease subunit HslV (176 aa).

Thr2 is an active-site residue. Residues Gly157, Cys160, and Thr163 each contribute to the Na(+) site.

Belongs to the peptidase T1B family. HslV subfamily. A double ring-shaped homohexamer of HslV is capped on each side by a ring-shaped HslU homohexamer. The assembly of the HslU/HslV complex is dependent on binding of ATP.

The protein resides in the cytoplasm. The catalysed reaction is ATP-dependent cleavage of peptide bonds with broad specificity.. Allosterically activated by HslU binding. Functionally, protease subunit of a proteasome-like degradation complex believed to be a general protein degrading machinery. The chain is ATP-dependent protease subunit HslV from Pseudomonas fluorescens (strain SBW25).